A 133-amino-acid chain; its full sequence is Methylglyoxal synthase (133 aa).

The region spanning 1-133 (MPPKPRIALI…ARENGAAQAG (133 aa)) is the MGS-like domain. Substrate-binding positions include histidine 12, lysine 16, 38–41 (TGTT), and 58–59 (SG). Aspartate 64 (proton donor/acceptor) is an active-site residue. Histidine 91 provides a ligand contact to substrate.

This sequence belongs to the methylglyoxal synthase family.

The enzyme catalyses dihydroxyacetone phosphate = methylglyoxal + phosphate. Functionally, catalyzes the formation of methylglyoxal from dihydroxyacetone phosphate. In Cupriavidus taiwanensis (strain DSM 17343 / BCRC 17206 / CCUG 44338 / CIP 107171 / LMG 19424 / R1) (Ralstonia taiwanensis (strain LMG 19424)), this protein is Methylglyoxal synthase.